A 443-amino-acid polypeptide reads, in one-letter code: Nitrate/nitrite binding protein NrtA (443 aa).

An N-terminal signal peptide occupies residues 1–25 (MSQFSRRKFLLTAGGTAAAALWLNA). Residue C26 is the site of N-palmitoyl cysteine attachment. Residue C26 is the site of S-diacylglycerol cysteine attachment. Positions 31 to 46 (SSTDTTGSTSTPAPSG) are enriched in low complexity. The disordered stretch occupies residues 31 to 52 (SSTDTTGSTSTPAPSGTSGGDA). Nitrate is bound by residues W96, Q150, H195, G239, and K268.

This sequence belongs to the CmpA/NrtA family. In terms of assembly, the complex is composed of two ATP-binding proteins (NrtC and NrtD), two transmembrane proteins (NrtB) and a solute-binding protein (NrtA). NrtA can form homotrimers. Post-translationally, the N-terminus is blocked.

It localises to the cell inner membrane. Functionally, part of the ABC transporter complex NrtABCD involved in nitrate uptake. The complex is probably also involved in nitrite transport. NrtA is the substrate-binding protein. Binds both nitrate and nitrite with high affinity. This Synechococcus elongatus (strain ATCC 33912 / PCC 7942 / FACHB-805) (Anacystis nidulans R2) protein is Nitrate/nitrite binding protein NrtA.